Here is a 609-residue protein sequence, read N- to C-terminus: Adagio protein 1 (609 aa).

Residues 1-17 show a composition bias toward low complexity; sequence MEWDSGSDLSADDASSL. The tract at residues 1-24 is disordered; it reads MEWDSGSDLSADDASSLADDEEGG. Residues 32 to 114 form the PAS domain; that stretch reads IPYPVGNLLH…SEIRKCIDEG (83 aa). S-4a-FMN cysteine is present on cysteine 82. The 44-residue stretch at 118-161 folds into the PAC domain; it reads QGELLNFRKDGSPLMNRLRLTPIYGDDDTITHIIGIQFFIETDI. The F-box domain occupies 195-241; it reads CGLFQLSDEVVSMKILSRLTPRDVASVSSVCRRLYVLTKNEDLWRRV. 5 Kelch repeats span residues 292-342, 345-392, 397-445, 450-501, and 516-564; these read SRCN…SSPP, RWGH…SGLA, RSWH…PAAW, RLGH…TGSG, and RLDH…NIPG.

The protein belongs to the ADAGIO family. As to quaternary structure, interacts with NFXL2. Interacts (via N-terminus) with GI and (via Kelch repeats) with ADO3. Component of an E3 ubiquitin ligase SCF(ADO1) complex composed of SKP1A/ASK1 (or SKP1B/ASK2), CUL1, RBX1 and ADO1. Also interacts with SKP1D/ASK4, SKP1K/ASK11, CRY1, PHYB, APRR1 and APRR5, and probably with SKP1N/ASK14 and SKP1S/ASK19. In terms of processing, may be ubiquitinated. Degraded in a proteasome-dependent manner. FMN binds covalently to cysteine after exposure to blue light and is reversed in the dark. Ubiquitously expressed with higher levels in cotyledons and leaves.

Its subcellular location is the nucleus. The protein resides in the cytoplasm. The protein operates within protein modification; protein ubiquitination. Functionally, component of an E3 ubiquitin ligase complex that plays a central role in blue light-dependent circadian cycles. Acts as a blue light photoreceptor, due to the presence of FMN, that mediates light-regulated protein degradation of critical clock components by targeting them to the proteasome complex. The SCF(ADO1) E3 ubiquitin ligase complex is involved in the regulation of circadian clock-dependent processes including the transition to flowering time, hypocotyl elongation, cotyledons and leaf movement rhythms. APRR1/TOC1 and APRR5, but not 'GIGANTEA', are proteolytic substrates of this ubiquitin ligase complex. Blue light enhances cooperative stabilization of 'GIGANTEA' and ADO1/ZTL, leading to amplification and sharpening of the expression profile of APRR1/TOC1. ADO1/ZTL interacts with ADO3, preventing the interaction of ADO3 with CDF1. This is Adagio protein 1 (ADO1) from Arabidopsis thaliana (Mouse-ear cress).